Here is a 664-residue protein sequence, read N- to C-terminus: MKRRNADCSKLRRPLKRNRITEGIYGSTFLYLKFLVVWALVLLADFVLEFRFEYLWPFWLFIRSVYDSFRYQGLAFSVFFVCVAFTSNIICLLFIPIQWLFFAASTYVWVQYVWHTERGVCLPTVSLWILFVYIEAAIRFKDLKNFHVDLCRPFAAHCIGYPVVTLGFGFKSYVSYKMRLRKQKEVQKENEFYMQLLQQALPPEQQMLQKQEKEAEEAAKGLPDMDSSILIHHNGGIPANKKLSTALPEIEYREKGKEKDKDAKKHNLGINNNNILQPVDSKIQEIEYMENHINSKRLNNDLVGSTENLLKEDSCTASSKNYKNASGVVNSSPRSHSATNGSIPSSSSKNEKKQRCTSKGPSAHKDLMENCIPNNQLSKPDALVRLEQDIKKLKADLQASRQVEQELRSQISSLSSTERGIRSEMGQLRQENELLQNKLHNAVQMKQKDKQNISQLEKRLKAEQEARGFVEKQLMEEKKRKKLEEATAARAVAFAAASRGECTETLRSRIRELEAEGKKLTMDLKVKEEQIRELELKVQELRKYKENEKDTEVLMSALSAMQDKTQHLENSLSAETRIKLDLFSALGDAKRQLEIAQGQILQKDQEIKDLKQKIAEVMAVMPSITYSAATSPLSPVSPHYSSKFVETSPSGLDPNASVYQPLKK.

Helical transmembrane passes span 28–48 (TFLY…DFVL), 75–95 (AFSV…LLFI), 120–140 (VCLP…AIRF), and 154–174 (FAAH…KSYV). Residues 252-265 (YREKGKEKDKDAKK) are compositionally biased toward basic and acidic residues. Positions 252 to 274 (YREKGKEKDKDAKKHNLGINNNN) are disordered. Phosphoserine is present on Ser305. Positions 320 to 348 (KNYKNASGVVNSSPRSHSATNGSIPSSSS) are enriched in polar residues. Positions 320–375 (KNYKNASGVVNSSPRSHSATNGSIPSSSSKNEKKQRCTSKGPSAHKDLMENCIPNN) are disordered. Asn324 is a glycosylation site (N-linked (GlcNAc...) asparagine). Ser332 is subject to Phosphoserine. Asn340 and Asn452 each carry an N-linked (GlcNAc...) asparagine glycan. Positions 630 to 664 (TSPLSPVSPHYSSKFVETSPSGLDPNASVYQPLKK) are disordered. 2 positions are modified to phosphoserine: Ser631 and Ser634. Residue Asn655 is glycosylated (N-linked (GlcNAc...) asparagine).

It belongs to the macoilin family.

It localises to the rough endoplasmic reticulum membrane. It is found in the nucleus membrane. In terms of biological role, plays a role in the regulation of neuronal activity. This chain is Macoilin, found in Rattus norvegicus (Rat).